The chain runs to 461 residues: tRNA modification GTPase MnmE (461 aa).

The (6S)-5-formyl-5,6,7,8-tetrahydrofolate site is built by arginine 27, glutamate 89, and arginine 128. Positions 224 to 382 (GLATAIVGRP…LENAIEKLFF (159 aa)) constitute a TrmE-type G domain. K(+) is bound at residue asparagine 234. GTP-binding positions include 234–239 (NVGKSS), 253–259 (TDIAGTT), and 278–281 (DTAG). Mg(2+) is bound at residue serine 238. Residues threonine 253, isoleucine 255, and threonine 258 each contribute to the K(+) site. Threonine 259 provides a ligand contact to Mg(2+). Lysine 461 provides a ligand contact to (6S)-5-formyl-5,6,7,8-tetrahydrofolate.

The protein belongs to the TRAFAC class TrmE-Era-EngA-EngB-Septin-like GTPase superfamily. TrmE GTPase family. Homodimer. Heterotetramer of two MnmE and two MnmG subunits. Requires K(+) as cofactor.

Its subcellular location is the cytoplasm. Functionally, exhibits a very high intrinsic GTPase hydrolysis rate. Involved in the addition of a carboxymethylaminomethyl (cmnm) group at the wobble position (U34) of certain tRNAs, forming tRNA-cmnm(5)s(2)U34. In Lactobacillus gasseri (strain ATCC 33323 / DSM 20243 / BCRC 14619 / CIP 102991 / JCM 1131 / KCTC 3163 / NCIMB 11718 / NCTC 13722 / AM63), this protein is tRNA modification GTPase MnmE.